A 145-amino-acid chain; its full sequence is D-aminoacyl-tRNA deacylase (145 aa).

The short motif at 137-138 is the Gly-cisPro motif, important for rejection of L-amino acids element; that stretch reads GP.

The protein belongs to the DTD family. Homodimer.

Its subcellular location is the cytoplasm. It carries out the reaction glycyl-tRNA(Ala) + H2O = tRNA(Ala) + glycine + H(+). It catalyses the reaction a D-aminoacyl-tRNA + H2O = a tRNA + a D-alpha-amino acid + H(+). Its function is as follows. An aminoacyl-tRNA editing enzyme that deacylates mischarged D-aminoacyl-tRNAs. Also deacylates mischarged glycyl-tRNA(Ala), protecting cells against glycine mischarging by AlaRS. Acts via tRNA-based rather than protein-based catalysis; rejects L-amino acids rather than detecting D-amino acids in the active site. By recycling D-aminoacyl-tRNA to D-amino acids and free tRNA molecules, this enzyme counteracts the toxicity associated with the formation of D-aminoacyl-tRNA entities in vivo and helps enforce protein L-homochirality. The sequence is that of D-aminoacyl-tRNA deacylase from Pseudomonas putida (strain W619).